A 524-amino-acid chain; its full sequence is Thioredoxin reductase 2, mitochondrial (524 aa).

Residues 1–34 constitute a mitochondrion transit peptide; it reads MVAAMVAALRGPSRRFRPRTRALTRGTRGAASAA. 41–70 is an FAD binding site; sequence DLLVIGGGSGGLACAKEAAQLGKKVAVADY. N6-succinyllysine is present on Lys-79. Residues Cys-86 and Cys-91 are joined by a disulfide bond. Residues Lys-175 and Lys-329 each carry the N6-succinyllysine modification. Catalysis depends on His-497, which acts as the Proton acceptor. The segment at residues 522 to 523 is a cross-link (cysteinyl-selenocysteine (Cys-Sec)); the sequence is CU. Position 523 (Sec-523) is a non-standard amino acid, selenocysteine.

This sequence belongs to the class-I pyridine nucleotide-disulfide oxidoreductase family. Homodimer. FAD is required as a cofactor. As to expression, expressed in liver, heart, testis and kidney.

It is found in the mitochondrion. It carries out the reaction [thioredoxin]-dithiol + NADP(+) = [thioredoxin]-disulfide + NADPH + H(+). In terms of biological role, involved in the control of reactive oxygen species levels and the regulation of mitochondrial redox homeostasis. Maintains thioredoxin in a reduced state. May play a role in redox-regulated cell signaling. This Mus musculus (Mouse) protein is Thioredoxin reductase 2, mitochondrial.